A 511-amino-acid polypeptide reads, in one-letter code: V-type proton ATPase subunit B, brain isoform (511 aa).

Arg-400 lines the ATP pocket.

This sequence belongs to the ATPase alpha/beta chains family. As to quaternary structure, V-ATPase is a heteromultimeric enzyme made up of two complexes: the ATP-hydrolytic V1 complex and the proton translocation V0 complex. The V1 complex consists of three catalytic AB heterodimers that form a heterohexamer, three peripheral stalks each consisting of EG heterodimers, one central rotor including subunits D and F, and the regulatory subunits C and H. The proton translocation complex V0 consists of the proton transport subunit a, a ring of proteolipid subunits c9c'', rotary subunit d, subunits e and f, and the accessory subunits ATP6AP1/Ac45 and ATP6AP2/PRR. Kidney; found in early distal nephron, encompassing thick ascending limbs and distal convoluted tubules and in the alpha-intercalated cells of the cortical collecting ducts (at protein level). Expressed in epididymal clear cells (at protein level). Mainly expressed in the organ of Corti and spiral ganglion neurons, in both the early postnatal cochlea (P2) and the adult cochlea (P30).

The protein localises to the apical cell membrane. It localises to the melanosome. Its subcellular location is the cytoplasm. The protein resides in the cytoplasmic vesicle. It is found in the secretory vesicle. The protein localises to the synaptic vesicle membrane. It localises to the clathrin-coated vesicle membrane. Its function is as follows. Non-catalytic subunit of the V1 complex of vacuolar(H+)-ATPase (V-ATPase), a multisubunit enzyme composed of a peripheral complex (V1) that hydrolyzes ATP and a membrane integral complex (V0) that translocates protons. V-ATPase is responsible for acidifying and maintaining the pH of intracellular compartments and in some cell types, is targeted to the plasma membrane, where it is responsible for acidifying the extracellular environment. In renal intercalated cells, can partially compensate the lack of ATP6V1B1 and mediate secretion of protons (H+) into the urine under base-line conditions but not in conditions of acid load. The polypeptide is V-type proton ATPase subunit B, brain isoform (Atp6v1b2) (Mus musculus (Mouse)).